Reading from the N-terminus, the 523-residue chain is MNQPCNSMEPRVMDDDMLKLAVGDQGPQEEAGQLAKQEGILFKDVLSLQLDFRNILRIDNLWQFENLRKLQLDNNIIEKIEGLENLAHLVWLDLSFNNIETIEGLDTLVNLEDLSLFNNRISKIDSLDALVKLQVLSLGNNRIDNMMNIIYLRRFKCLRTLSLSRNPISEAEDYKMFICAYLPDLMYLDYRRIDDHTKKLAEAKHQYSIDELKHQENLMQAQLEDEQAQREELEKHKTAFVEHLNGSFLFDSMYAEDSEGNNLSYLPGVGELLETYKDKFVIICVNIFEYGLKQQEKRKTELDTFSECVREAIQENQEQGKRKIAKFEEKHLSSLSAIREELELPNIEKMILECSADISELFDALMTLEMQLVEQLEETINMFERNIVDMVGLFIENVQSLMAQCRDLENHHHEKLLEISISTLEKIVEGDLDEDLPNDLRALFVDKDTIVNAVGASHDIHLLKIDNREDELVTRINSWCTRLIDRIHKDEIMRNRKRVKEINQYIDHMQSELDNLECGDILD.

5 LRR repeats span residues 44–65, 66–87, 88–109, 110–131, and 132–153; these read DVLS…WQFE, NLRK…ENLA, HLVW…DTLV, NLED…DALV, and KLQV…IYLR. Positions 166–204 constitute an LRRCT domain; sequence NPISEAEDYKMFICAYLPDLMYLDYRRIDDHTKKLAEAK. Coiled coils occupy residues 208-242 and 366-391; these read SIDE…AFVE and MTLE…VDMV.

This sequence belongs to the DRC3 family. Component of the nexin-dynein regulatory complex (N-DRC). Interacts with DRC1. Interacts with TCTE1/DRC5. Interacts with DRC7.

It is found in the cytoplasm. The protein resides in the cytoskeleton. Its subcellular location is the cilium axoneme. The protein localises to the cell projection. It localises to the cilium. It is found in the flagellum axoneme. The protein resides in the flagellum. Component of the nexin-dynein regulatory complex (N-DRC) a key regulator of ciliary/flagellar motility which maintains the alignment and integrity of the distal axoneme and regulates microtubule sliding in motile axonemes. The polypeptide is Dynein regulatory complex subunit 3 (DRC3) (Homo sapiens (Human)).